A 619-amino-acid polypeptide reads, in one-letter code: Teichoic acid poly(ribitol-phosphate) polymerase (619 aa).

This sequence belongs to the CDP-glycerol glycerophosphotransferase family.

The protein localises to the cell membrane. The enzyme catalyses 4-O-[1-D-ribitylphospho-(2R)-1-glycerylphospho]-N-acetyl-beta-D-mannosaminyl-(1-&gt;4)-N-acetyl-alpha-D-glucosaminyl di-trans,octa-cis-undecaprenyl diphosphate + n CDP-L-ribitol = 4-O-[(D-ribitylphospho)(n)-D-ribitylphospho-(2R)-glycerylphospho]-N-acetyl-beta-D-mannosaminyl-(1-&gt;4)-N-acetyl-alpha-D-glucosaminyl di-trans,octa-cis-undecaprenyl diphosphate + n CMP + n H(+). Its pathway is cell wall biogenesis; poly(ribitol phosphate) teichoic acid biosynthesis. In terms of biological role, responsible for the polymerization of the main chain of the major teichoic acid by sequential transfer of ribitol phosphate units from CDP-ribitol to the glycerol phosphate attached to the disaccharide linkage unit. Synthesizes polymers of up to 40 ribitol phosphate units in length. The polypeptide is Teichoic acid poly(ribitol-phosphate) polymerase (tarL) (Bacillus spizizenii (strain ATCC 23059 / NRRL B-14472 / W23) (Bacillus subtilis subsp. spizizenii)).